A 312-amino-acid polypeptide reads, in one-letter code: Pre-mRNA-splicing factor 38A (312 aa).

Positions 1–179 (MANRTVKDAH…VLEETEQLDP (179 aa)) are N-terminal protein interaction domain. Positions 180–312 (RVSALEEDMD…SHKKSRRGNE (133 aa)) are disordered. A compositionally biased stretch (acidic residues) spans 184-201 (LEEDMDDVESSEEEEDDD). The span at 202-223 (EKGRDPSPEHHRRNYRDLDRPR) shows a compositional bias: basic and acidic residues. 2 stretches are compositionally biased toward basic residues: residues 224-294 (RSPS…RSHS) and 301-312 (KKSHKKSRRGNE).

The protein belongs to the PRP38 family. Component of the spliceosome B complex.

It is found in the nucleus. In terms of biological role, involved in pre-mRNA splicing as a component of the spliceosome. This is Pre-mRNA-splicing factor 38A (prpf38a) from Xenopus laevis (African clawed frog).